The following is a 539-amino-acid chain: Chaperonin GroEL (539 aa).

Residues Thr-29–Pro-32, Asp-86–Thr-90, Gly-413, Asn-477–Ala-479, and Asp-493 contribute to the ATP site.

It belongs to the chaperonin (HSP60) family. As to quaternary structure, forms a cylinder of 14 subunits composed of two heptameric rings stacked back-to-back. Interacts with the co-chaperonin GroES.

The protein resides in the cytoplasm. It catalyses the reaction ATP + H2O + a folded polypeptide = ADP + phosphate + an unfolded polypeptide.. Together with its co-chaperonin GroES, plays an essential role in assisting protein folding. The GroEL-GroES system forms a nano-cage that allows encapsulation of the non-native substrate proteins and provides a physical environment optimized to promote and accelerate protein folding. The chain is Chaperonin GroEL from Clavibacter michiganensis subsp. michiganensis (strain NCPPB 382).